Consider the following 206-residue polypeptide: RNA-binding protein (206 aa).

Residues 87 to 206 (PRGMQRGNRR…SGAKSKRRPR (120 aa)) form a disordered region. The segment covering 109-132 (MPKDDSNDRKKAKTSKDRKVEKSS) has biased composition (basic and acidic residues).

This sequence belongs to the phytoreovirus RNA-binding protein family.

It is found in the host cytoplasm. Its function is as follows. Constituent of viral factories. Binds to ssRNA and dsRNA. In Rice gall dwarf virus (RGDV), this protein is RNA-binding protein.